Here is a 421-residue protein sequence, read N- to C-terminus: MPGRGRCPDCGSAELVEDSHYSQNQLVCSDCGCVVTEGVLTTTFSDEGNLREVTYSRSTGENEQVSRSQQRGLRRVRDLCRVLQLPPTFEDTAVAYYQQAHQLAGIRTARLQKKEVLAGCCVLITCRQRNWPLTMGTICTLLYADLDVFSGTYMQIVKLLGLDVPSLCLVDLVKTYCSSFKLFEASPSVPAKYVEDKEKMLSRTLQLVELADETWLVTGRHPLPVITAATFLAWQSLRPSDRLTCSLARFCKLANVDLPYPASSRLQELLAVLLRMAEQLAWLQVLKLDKRSVVKHIGDLLQHRHMLVRKAFRDGTAEMDAGEKELQGQGQGQGLGDEDVGSSSLELPAGKRPSSPALLLPPCMLKPPKRVCPAPPVSMVTGDEDISDSEIEQYLRTPQEVRDFQKAQAARQAAQGTPNPP.

The TFIIB-type zinc finger occupies 2–36; it reads PGRGRCPDCGSAELVEDSHYSQNQLVCSDCGCVVT. The Zn(2+) site is built by Cys-7, Cys-10, Cys-28, and Cys-31. 2 tandem repeats follow at residues 72 to 157 and 173 to 249. Positions 108–114 are interaction with target DNA; it reads TARLQKK. The segment at 325 to 357 is disordered; it reads ELQGQGQGQGLGDEDVGSSSLELPAGKRPSSPA. Ser-355 carries the post-translational modification Phosphoserine. The interval 359–365 is required for the formation of a ternary complex with DNA and TBP; not required for interaction with TBP in the absence of DNA; it reads LLPPCML. Cys-363 is modified (cysteine sulfenic acid (-SOH)). The tract at residues 367 to 421 is required for interaction with TBP and formation of a ternary complex with DNA and TBP; sequence PPKRVCPAPPVSMVTGDEDISDSEIEQYLRTPQEVRDFQKAQAARQAAQGTPNPP.

It belongs to the TFIIB family. In terms of assembly, component of TFIIIB complexes. The TFIIIB complex has two activities, alpha and beta. The TFIIIB-alpha activity complex is composed of TBP, BDP1, and a complex containing both BRF2 and at least four stably associated proteins; this complex inhibits the transcription by pol III via its phosphorylation by CK2; YY1 facilitates the TFIIIB-alpha complex formation. Interacts with TBP; this interaction promotes recruitment of BRF2 to TATA box-containing promoters. Interacts with TBP and the BURE sequence (GC-rich sequence downstream from the TATA box) to form a strong ternary complex which is joined by BDP1; this ternary complex stimulates pol III transcription. Forms a trimeric complex composed of TBP, BRF2 and mini-SNAPc complex (SNAP43, SNAP50, and the N-terminal third of SNAP190) on the promoter. Assembly of the TBP-BRF2 complex is stimulated by SNAP190. Interacts with MAF1 and SNAPC4. In response to oxidative stress, Cys-363 is reversibly oxidized to cysteine sulfenic acid. Oxidation of Cys-363 impairs formation of a ternary complex with TBP and DNA and down-regulates expression of target genes in response to oxidative stress.

It localises to the nucleus. General activator of RNA polymerase III transcription. Factor exclusively required for RNA polymerase III transcription of genes with promoter elements upstream of the initiation sites. Contributes to the regulation of gene expression; functions as activator in the absence of oxidative stress. Down-regulates expression of target genes in response to oxidative stress. Overexpression protects cells against apoptosis in response to oxidative stress. The sequence is that of Transcription factor IIIB 50 kDa subunit (BRF2) from Bos taurus (Bovine).